Reading from the N-terminus, the 328-residue chain is Phosphate acyltransferase (328 aa).

Belongs to the PlsX family. Homodimer. Probably interacts with PlsY.

It is found in the cytoplasm. It catalyses the reaction a fatty acyl-[ACP] + phosphate = an acyl phosphate + holo-[ACP]. Its pathway is lipid metabolism; phospholipid metabolism. In terms of biological role, catalyzes the reversible formation of acyl-phosphate (acyl-PO(4)) from acyl-[acyl-carrier-protein] (acyl-ACP). This enzyme utilizes acyl-ACP as fatty acyl donor, but not acyl-CoA. This is Phosphate acyltransferase from Pseudothermotoga lettingae (strain ATCC BAA-301 / DSM 14385 / NBRC 107922 / TMO) (Thermotoga lettingae).